The following is a 295-amino-acid chain: UDP-N-acetylenolpyruvoylglucosamine reductase (295 aa).

Residues 24–188 enclose the FAD-binding PCMH-type domain; the sequence is KVGGNAEIFF…LKVVFKINKG (165 aa). R168 is an active-site residue. Catalysis depends on S217, which acts as the Proton donor. Residue E287 is part of the active site.

It belongs to the MurB family. It depends on FAD as a cofactor.

Its subcellular location is the cytoplasm. It carries out the reaction UDP-N-acetyl-alpha-D-muramate + NADP(+) = UDP-N-acetyl-3-O-(1-carboxyvinyl)-alpha-D-glucosamine + NADPH + H(+). The protein operates within cell wall biogenesis; peptidoglycan biosynthesis. Cell wall formation. This Rickettsia peacockii (strain Rustic) protein is UDP-N-acetylenolpyruvoylglucosamine reductase.